We begin with the raw amino-acid sequence, 356 residues long: sn-glycerol-3-phosphate import ATP-binding protein UgpC (356 aa).

One can recognise an ABC transporter domain in the interval 4 to 235 (LKLQAVTKSW…PASLFVASFI (232 aa)). Residue 37-44 (GPSGCGKS) participates in ATP binding.

It belongs to the ABC transporter superfamily. sn-glycerol-3-phosphate importer (TC 3.A.1.1.3) family. In terms of assembly, the complex is composed of two ATP-binding proteins (UgpC), two transmembrane proteins (UgpA and UgpE) and a solute-binding protein (UgpB).

Its subcellular location is the cell inner membrane. It carries out the reaction sn-glycerol 3-phosphate(out) + ATP + H2O = sn-glycerol 3-phosphate(in) + ADP + phosphate + H(+). The enzyme catalyses glycerol 2-phosphate(out) + ATP + H2O = glycerol 2-phosphate(in) + ADP + phosphate + H(+). With respect to regulation, ATPase activity is stimulated when UgpB is bound to G3P. Transport is inhibited in vivo by increasing levels of internal phosphate. However, ATPase activity in proteoliposomes is neither inhibited by phosphate nor by the signal transducing protein PhoU or the phosphodiesterase UgpQ. Activated by gluconate and inhibited by fumarate. Its function is as follows. Part of the ABC transporter complex UgpBAEC involved in sn-glycerol-3-phosphate (G3P) import. Responsible for energy coupling to the transport system. Can also transport glycerophosphoryl diesters, which are hydrolyzed to G3P and alcohol during transport. The G3P moiety can be detected in the cytoplasm whereas the corresponding alcohol is usually found in the culture medium. It was proposed by Yang et al that the complex could also transport glycerol-2-phosphate (G2P) in vivo, but it was shown later by Wuttge et al that UgpB does not bind G2P, questioning this transport activity. G2P might be converted in the periplasm to G3P before its transport. In Escherichia coli (strain K12), this protein is sn-glycerol-3-phosphate import ATP-binding protein UgpC.